We begin with the raw amino-acid sequence, 291 residues long: Methionine aminopeptidase (291 aa).

His118 serves as a coordination point for substrate. Positions 135, 146, and 209 each coordinate a divalent metal cation. His216 is a substrate binding site. Residues Glu241 and Glu273 each contribute to the a divalent metal cation site.

The protein belongs to the peptidase M24A family. Methionine aminopeptidase type 1 subfamily. In terms of assembly, monomer. Co(2+) serves as cofactor. It depends on Zn(2+) as a cofactor. Mn(2+) is required as a cofactor. Requires Fe(2+) as cofactor.

The catalysed reaction is Release of N-terminal amino acids, preferentially methionine, from peptides and arylamides.. Functionally, removes the N-terminal methionine from nascent proteins. The N-terminal methionine is often cleaved when the second residue in the primary sequence is small and uncharged (Met-Ala-, Cys, Gly, Pro, Ser, Thr, or Val). Requires deformylation of the N(alpha)-formylated initiator methionine before it can be hydrolyzed. This Chlamydia pneumoniae (Chlamydophila pneumoniae) protein is Methionine aminopeptidase.